The following is a 180-amino-acid chain: Large ribosomal subunit protein uL5 (180 aa).

The protein belongs to the universal ribosomal protein uL5 family. Part of the 50S ribosomal subunit; part of the 5S rRNA/L5/L18/L25 subcomplex. Contacts the 5S rRNA and the P site tRNA. Forms a bridge to the 30S subunit in the 70S ribosome.

This is one of the proteins that bind and probably mediate the attachment of the 5S RNA into the large ribosomal subunit, where it forms part of the central protuberance. In the 70S ribosome it contacts protein S13 of the 30S subunit (bridge B1b), connecting the 2 subunits; this bridge is implicated in subunit movement. Contacts the P site tRNA; the 5S rRNA and some of its associated proteins might help stabilize positioning of ribosome-bound tRNAs. This Chlamydia trachomatis serovar A (strain ATCC VR-571B / DSM 19440 / HAR-13) protein is Large ribosomal subunit protein uL5.